Reading from the N-terminus, the 500-residue chain is MSAGSPAEPRPVPGSVHSVSVSIPDVRSVIGFESGDPATLRRIAWGYPRFRTHPYVARVAALVAGAVGGRAQDLVLTRSVRAAEAAAAYAGLAPGAVFEASGVRGVRVAEDDPALAAVRGHVQHTGAHLTSREAEDVLLEAGLIEARQAEEAVSEEPAEAVRSALATAYGAGDPADVSLHNSGMNAVAAAVAAVTDLQRPAGRRRWIQLGWIFFDTMSLLDKRLFGTDHVTVPDPFDLAALSRVVAAHPGQLAGIIAELPSNPSLRCPDVPALREIADRAGCALVLDATIATPHNVDVLGYADVVCESLTKYATGSADVLMGAAVVGSASPWAAQLREGLRRFGDVPYHRDAARVAARIRDYGDRMKRVNAGAVALAGFLERQSAVRAVSWPYDAASQANYRKVERLSDAPGGLLMVDLRVPLERVYDRLAVAKGPSFGAEFTMASPQIFIAHFDLLSTPEGRAELRSRGLHRDMLRISVGVEDPELIAEVFRDAFDGAG.

Position 311 is an N6-(pyridoxal phosphate)lysine (lysine 311).

Belongs to the trans-sulfuration enzymes family. Pyridoxal 5'-phosphate serves as cofactor.

It catalyses the reaction L-2-amino-4-chloropent-4-enoate = L-propargylglycine + chloride + H(+). It functions in the pathway amino-acid metabolism. It participates in antibiotic biosynthesis. In terms of biological role, involved in the biosynthesis of terminal alkyne-containing amino acids such as L-propargylglycine (Pra) and L-beta-ethynylserine, that are produced as antibiotics by S.cattleya. Catalyzes gamma-elimination of chloride from 4-chloro-allyl-L-glycine (also named L-2-amino-4-chloropent-4-enoate), followed by an isomerization, to form the terminal-alkyne product L-propargylglycine. The protein is L-2-amino-4-chloropent-4-enoate dechlorinase/desaturase of Streptantibioticus cattleyicolor (strain ATCC 35852 / DSM 46488 / JCM 4925 / NBRC 14057 / NRRL 8057) (Streptomyces cattleya).